The sequence spans 180 residues: Large ribosomal subunit protein uL6 (180 aa).

The protein belongs to the universal ribosomal protein uL6 family. Part of the 50S ribosomal subunit.

In terms of biological role, this protein binds to the 23S rRNA, and is important in its secondary structure. It is located near the subunit interface in the base of the L7/L12 stalk, and near the tRNA binding site of the peptidyltransferase center. This Desulforapulum autotrophicum (strain ATCC 43914 / DSM 3382 / VKM B-1955 / HRM2) (Desulfobacterium autotrophicum) protein is Large ribosomal subunit protein uL6.